The primary structure comprises 160 residues: Small ribosomal subunit protein uS7 (160 aa).

This sequence belongs to the universal ribosomal protein uS7 family. As to quaternary structure, part of the 30S ribosomal subunit. Contacts proteins S9 and S11.

One of the primary rRNA binding proteins, it binds directly to 16S rRNA where it nucleates assembly of the head domain of the 30S subunit. Is located at the subunit interface close to the decoding center, probably blocks exit of the E-site tRNA. The chain is Small ribosomal subunit protein uS7 from Rickettsia rickettsii (strain Iowa).